The chain runs to 212 residues: uncharacterized protein (212 aa).

Disordered regions lie at residues 1–148 and 168–190; these read MEKD…LNDL and EVVTDAKKEEKPSQMDVEDLSED. A compositionally biased stretch (basic and acidic residues) spans 61 to 70; sequence KELESEDQGK. Over residues 71–85 the composition is skewed to polar residues; sequence DPSSNAEDASCQKNL. Basic and acidic residues-rich tracts occupy residues 99–115, 124–144, and 168–180; these read LGHESGKQDPEREKSDL, EGEHADGGLQEAKEQEAESIK, and EVVTDAKKEEKPS.

This is an uncharacterized protein from Homo sapiens (Human).